A 291-amino-acid chain; its full sequence is Elongation factor Ts (291 aa).

The tract at residues Thr-79–Val-82 is involved in Mg(2+) ion dislocation from EF-Tu.

It belongs to the EF-Ts family.

The protein resides in the cytoplasm. Functionally, associates with the EF-Tu.GDP complex and induces the exchange of GDP to GTP. It remains bound to the aminoacyl-tRNA.EF-Tu.GTP complex up to the GTP hydrolysis stage on the ribosome. In Anaplasma marginale (strain St. Maries), this protein is Elongation factor Ts.